Reading from the N-terminus, the 3080-residue chain is Adhesion G-protein coupled receptor G4 (3080 aa).

An N-terminal signal peptide occupies residues 1-27 (MKEHIIYQKLYGLILMSSFIFLSDTLS). Residues 28-2740 (LKGKKLDFFG…SRSTVDSVNE (2713 aa)) are Extracellular-facing. The Pentraxin (PTX) domain maps to 29-228 (KGKKLDFFGR…IPTVDRTLRC (200 aa)). Cystine bridges form between C58–C123 and C200–C228. D202 is a Mg(2+) binding site. N-linked (GlcNAc...) asparagine glycans are attached at residues N233, N487, N836, and N899. A compositionally biased stretch (polar residues) spans 946-959 (SEGISAGSPTSGST). The interval 946-965 (SEGISAGSPTSGSTHIFGEP) is disordered. N-linked (GlcNAc...) asparagine glycosylation occurs at N1020. A disordered region spans residues 1274-1348 (VTEMSPSKNS…ITPTLTSSNT (75 aa)). Composition is skewed to polar residues over residues 1277–1296 (MSPSKNSFISYSRGTPSLEM), 1305–1315 (TKISSHQTHSP), and 1324–1348 (SDGNLASSPTSGSTQITPTLTSSNT). Residue N1519 is glycosylated (N-linked (GlcNAc...) asparagine). Positions 2109-2139 (SRTTITANPRTVSHPSSFSRKTMSPSTTDHT) are enriched in polar residues. The segment at 2109-2141 (SRTTITANPRTVSHPSSFSRKTMSPSTTDHTLS) is disordered. N-linked (GlcNAc...) asparagine glycans are attached at residues N2361 and N2640. Residues 2578 to 2734 (MAFSIHSYEE…GVLMDLSRST (157 aa)) form the GAIN-B domain. 2 disulfide bridges follow: C2685–C2716 and C2704–C2718. A GPS region spans residues 2685 to 2734 (CAFWDFENNNGLGGWNSSGCKVKETNVNYTICQCDHLTHFGVLMDLSRST). Residues 2723–2734 (HFGVLMDLSRST) form a stachel region. A helical membrane pass occupies residues 2741-2766 (QILALITYTGCGISSIFLGVAVVTYI). The Cytoplasmic portion of the chain corresponds to 2767-2777 (AFHKLRKDYPA). Residues 2778-2800 (KILINLCTALLMLNLVFLINSWL) form a helical membrane-spanning segment. The Extracellular portion of the chain corresponds to 2801–2806 (SSFQKV). The chain crosses the membrane as a helical span at residues 2807–2835 (GVCITAAVALHYFLLVSFTWMGLEAVHMY). C2809 and C2886 are oxidised to a cystine. The Cytoplasmic portion of the chain corresponds to 2836–2849 (LALVKVFNIYIPNY). Residues 2850 to 2870 (ILKFCLVGWGIPAIMVAITVS) form a helical membrane-spanning segment. The Extracellular portion of the chain corresponds to 2871-2892 (VKKDLYGTLSPTTPFCWIKDDS). A helical transmembrane segment spans residues 2893–2918 (IFYISVVAYFCLIFLMNLSMFCTVLV). Over 2919–2937 (QLNSVKSQIQKTRRKMILH) the chain is Cytoplasmic. Residues 2938–2961 (DLKGTMSLTFLLGLTWGFAFFAWG) traverse the membrane as a helical segment. Residues 2962–2965 (PMRN) lie on the Extracellular side of the membrane. Residues 2966-2989 (FFLYLFAIFNTLQGFFIFVFHCVM) form a helical membrane-spanning segment. The Cytoplasmic portion of the chain corresponds to 2990–3080 (KESVREQWQI…FDKDPYCSSP (91 aa)). Over residues 3051-3065 (FKSLGSAQGTPSEIS) the composition is skewed to polar residues. Positions 3051–3080 (FKSLGSAQGTPSEISFPNDDFDKDPYCSSP) are disordered.

Belongs to the G-protein coupled receptor 2 family. Adhesion G-protein coupled receptor (ADGR) subfamily. In terms of assembly, homodimer; homodimerizes via its Pentraxin domain in a calcium-independent manner. Heterodimer of 2 chains generated by proteolytic processing; the large extracellular N-terminal fragment and the membrane-bound C-terminal fragment predominantly remain associated and non-covalently linked. In terms of processing, autoproteolytically processed at the GPS region of the GAIN-B domain; this cleavage modulates receptor activity. Post-translationally, N-glycosylated. As to expression, detected in fetal retina. Highly expressed in normal enterochromaffin cells and in neuroendocrine carcinoma. Detected in normal liver; highly expressed in primary liver carcinoma.

The protein localises to the membrane. Its activity is regulated as follows. Forms a heterodimer of 2 chains generated by proteolytic processing that remain associated through non-covalent interactions mediated by the GAIN-B domain. In the inactivated receptor, the Stachel sequence (also named stalk) is embedded in the GAIN-B domain, where it adopts a beta-strand conformation. On activation, the Stachel moves into the 7 transmembrane region and adopts a twisted hook-shaped configuration that forms contacts within the receptor, leading to coupling of a G-alpha protein, which activates signaling. The cleaved GAIN-B and N-terminal domains can then dissociate from the rest of the receptor. Functionally, orphan adhesion G-protein coupled receptor (aGPCR). Ligand binding causes a conformation change that triggers signaling via guanine nucleotide-binding proteins (G proteins) and modulates the activity of downstream effectors, such as adenylate cyclase. ADGRG4 is coupled to G(s) G proteins and mediates activation of adenylate cyclase activity. May be act as sensor of mechanical forces. The polypeptide is Adhesion G-protein coupled receptor G4 (Homo sapiens (Human)).